Reading from the N-terminus, the 338-residue chain is GTPase Obg (338 aa).

The Obg domain occupies Met1–Met159. A disordered region spans residues Gly123–Gln145. Residues Ala160–Val323 enclose the OBG-type G domain. Residues Gly166–Ser173, Phe191–Val195, Asp213–Gly216, Thr280–Asp283, and Ser304–Val306 contribute to the GTP site. The Mg(2+) site is built by Ser173 and Thr193.

Belongs to the TRAFAC class OBG-HflX-like GTPase superfamily. OBG GTPase family. In terms of assembly, monomer. Mg(2+) serves as cofactor.

Its subcellular location is the cytoplasm. In terms of biological role, an essential GTPase which binds GTP, GDP and possibly (p)ppGpp with moderate affinity, with high nucleotide exchange rates and a fairly low GTP hydrolysis rate. Plays a role in control of the cell cycle, stress response, ribosome biogenesis and in those bacteria that undergo differentiation, in morphogenesis control. The polypeptide is GTPase Obg (Chlorobium chlorochromatii (strain CaD3)).